A 449-amino-acid polypeptide reads, in one-letter code: Putative methylthiotransferase MJ0865 (449 aa).

Residues 163-390 (SIRGANVYIE…EGEYRKLGLS (228 aa)) form the Radical SAM core domain. The [4Fe-4S] cluster site is built by cysteine 177, cysteine 181, and cysteine 184.

This sequence belongs to the methylthiotransferase family. Requires [4Fe-4S] cluster as cofactor.

This chain is Putative methylthiotransferase MJ0865, found in Methanocaldococcus jannaschii (strain ATCC 43067 / DSM 2661 / JAL-1 / JCM 10045 / NBRC 100440) (Methanococcus jannaschii).